Reading from the N-terminus, the 230-residue chain is Demethylmenaquinone methyltransferase (230 aa).

S-adenosyl-L-methionine is bound by residues Thr57, Asp77, and 101 to 102; that span reads DI.

The protein belongs to the class I-like SAM-binding methyltransferase superfamily. MenG/UbiE family.

The enzyme catalyses a 2-demethylmenaquinol + S-adenosyl-L-methionine = a menaquinol + S-adenosyl-L-homocysteine + H(+). It participates in quinol/quinone metabolism; menaquinone biosynthesis; menaquinol from 1,4-dihydroxy-2-naphthoate: step 2/2. In terms of biological role, methyltransferase required for the conversion of demethylmenaquinol (DMKH2) to menaquinol (MKH2). The protein is Demethylmenaquinone methyltransferase of Chlamydia pneumoniae (Chlamydophila pneumoniae).